Consider the following 147-residue polypeptide: MKIIIQRVKKAQVSIEGQIQGKINQGLLLLVGVGPEDQEEDLDYAVRKLVNMRIFSDAEGKMNLSVKDIEGEILSISQFTLFADTKKGNRPAFTGAAKPDMASDFYDAFNQKLAQEVPVQTGIFGADMQVELVNNGPVTIILDTKKR.

Residues 136–137 (GP) carry the Gly-cisPro motif, important for rejection of L-amino acids motif.

Belongs to the DTD family. Homodimer.

It localises to the cytoplasm. It carries out the reaction glycyl-tRNA(Ala) + H2O = tRNA(Ala) + glycine + H(+). The enzyme catalyses a D-aminoacyl-tRNA + H2O = a tRNA + a D-alpha-amino acid + H(+). An aminoacyl-tRNA editing enzyme that deacylates mischarged D-aminoacyl-tRNAs. Also deacylates mischarged glycyl-tRNA(Ala), protecting cells against glycine mischarging by AlaRS. Acts via tRNA-based rather than protein-based catalysis; rejects L-amino acids rather than detecting D-amino acids in the active site. By recycling D-aminoacyl-tRNA to D-amino acids and free tRNA molecules, this enzyme counteracts the toxicity associated with the formation of D-aminoacyl-tRNA entities in vivo and helps enforce protein L-homochirality. In Streptococcus pneumoniae serotype 2 (strain D39 / NCTC 7466), this protein is D-aminoacyl-tRNA deacylase.